A 181-amino-acid polypeptide reads, in one-letter code: uncharacterized protein (181 aa).

The segment at 162 to 181 is disordered; it reads QARGPAGTRTPQRRCSSHEA.

This is an uncharacterized protein from Homo sapiens (Human).